The sequence spans 493 residues: Transcript termination protein A18 (493 aa).

In terms of domain architecture, Helicase ATP-binding spans 100–256 (MIESKRPLYI…NSIINIAKLS (157 aa)). 113–120 (LACGFGKT) contributes to the ATP binding site. The DESH box signature appears at 206 to 209 (DESH).

This sequence belongs to the helicase family. Poxviruses subfamily. In terms of assembly, interacts with G2. Might be part of a transcription complex composed at least of G2, A18, and H5.

The protein resides in the virion. Its function is as follows. DNA helicase which seems to act as a postreplicative transcription termination factor. Involved in ATP-dependent release of nascent RNA. Forms a stable complex with single-stranded DNA, and to a lesser extent RNA. The chain is Transcript termination protein A18 from Homo sapiens (Human).